The primary structure comprises 452 residues: Trigger factor (452 aa).

Residues 169 to 254 (GDQLLIDFVG…VQEVRAPVDG (86 aa)) enclose the PPIase FKBP-type domain.

This sequence belongs to the FKBP-type PPIase family. Tig subfamily.

The protein localises to the cytoplasm. It carries out the reaction [protein]-peptidylproline (omega=180) = [protein]-peptidylproline (omega=0). Functionally, involved in protein export. Acts as a chaperone by maintaining the newly synthesized protein in an open conformation. Functions as a peptidyl-prolyl cis-trans isomerase. The chain is Trigger factor (tig) from Caulobacter vibrioides (strain ATCC 19089 / CIP 103742 / CB 15) (Caulobacter crescentus).